A 607-amino-acid chain; its full sequence is MTDLHSTVEKVTARVIERSRETRKAYLDLIQYEREKGVDRPNLSCSNLAHGFAAMNGDKPALRDFNRMNIGVVTSYNDMLSAHEPYYRYPEQMKVFAREVGATVQVAGGVPAMCDGVTQGQPGMEESLFSRDVIALATSVSLSHGMFEGAALLGICDKIVPGLLMGALRFGHLPTILVPSGPMTTGIPNKEKIRIRQLYAQGKIGQKELLDMEAACYHAEGTCTFYGTANTNQMVMEVLGLHMPGSAFVTPGTPLRQALTRAAVHRVAELGWKGDDYRPLGKIIDEKSIVNAIVGLLATGGSTNHTMHIPAIARAAGVIVNWNDFHDLSEVVPLIARIYPNGPRDINEFQNAGGMAYVIKELLSANLLNRDVTTIAKGGIEEYAKAPALNDAGELVWKPAGEPGDDTILRPVSNPFAKDGGLRLLEGNLGRAMYKASAVDPKFWTIEAPVRVFSDQDDVQKAFKAGELNKDVIVVVRFQGPRANGMPELHKLTPALGVLQDNGYKVALVTDGRMSGATGKVPVALHVSPEALGGGAIGKLRDGDIVRISVEEGKLEALVPADEWNARPHAEKPAFRPGTGRELFDIFRQNAAKAEDGAVAIYAGAGI.

C156 and C223 together coordinate [4Fe-4S] cluster.

The protein belongs to the IlvD/Edd family. [4Fe-4S] cluster is required as a cofactor.

The enzyme catalyses 6-phospho-D-gluconate = 2-dehydro-3-deoxy-6-phospho-D-gluconate + H2O. It functions in the pathway carbohydrate metabolism; Entner-Doudoroff pathway. Its function is as follows. Catalyzes the dehydration of 6-phospho-D-gluconate to 2-dehydro-3-deoxy-6-phospho-D-gluconate. This Zymomonas mobilis subsp. mobilis (strain ATCC 31821 / ZM4 / CP4) protein is Phosphogluconate dehydratase.